The primary structure comprises 90 residues: Barrier-to-autointegration factor-like protein (90 aa).

In terms of assembly, homodimer. Heterodimerizes with BANF1.

It localises to the nucleus. The protein resides in the cytoplasm. Its function is as follows. May play a role in BANF1 regulation and influence tissue-specific roles of BANF1. In Mus musculus (Mouse), this protein is Barrier-to-autointegration factor-like protein (Banf2).